Consider the following 51-residue polypeptide: Light-harvesting protein B-800/850 beta chain (51 aa).

Topologically, residues 2–23 are cytoplasmic; it reads ADDANKVWPSGLTTAEAEELQK. The chain crosses the membrane as a helical span at residues 24–46; that stretch reads GLVDGTRVFGVIAVLAHILAYAY. An a bacteriochlorophyll-binding site is contributed by His-40. Residues 47-51 lie on the Periplasmic side of the membrane; it reads TPWLH.

The protein belongs to the antenna complex beta subunit family. An alpha/beta heterodimer conjugated to 3 bacteriochlorophyll molecules. The core complex is formed by different alpha and beta chains, binding bacteriochlorophyll molecules, and arranged most probably in tetrameric structures disposed around the reaction center. The non-pigmented gamma chains may constitute additional components.

It localises to the cell inner membrane. Its function is as follows. Antenna complexes are light-harvesting systems, which transfer the excitation energy to the reaction centers. The chain is Light-harvesting protein B-800/850 beta chain (pucB) from Rubrivivax gelatinosus (Rhodocyclus gelatinosus).